The following is a 325-amino-acid chain: Glycerol-3-phosphate dehydrogenase [NAD(P)+] (325 aa).

NADPH is bound by residues serine 14, phenylalanine 15, arginine 35, and lysine 109. Sn-glycerol 3-phosphate-binding residues include lysine 109 and glycine 137. An NADPH-binding site is contributed by alanine 141. Sn-glycerol 3-phosphate contacts are provided by lysine 192, aspartate 247, serine 257, arginine 258, and asparagine 259. The active-site Proton acceptor is the lysine 192. Arginine 258 serves as a coordination point for NADPH. NADPH is bound by residues leucine 282 and glutamate 284.

This sequence belongs to the NAD-dependent glycerol-3-phosphate dehydrogenase family.

It localises to the cytoplasm. It carries out the reaction sn-glycerol 3-phosphate + NAD(+) = dihydroxyacetone phosphate + NADH + H(+). The enzyme catalyses sn-glycerol 3-phosphate + NADP(+) = dihydroxyacetone phosphate + NADPH + H(+). It participates in membrane lipid metabolism; glycerophospholipid metabolism. Its function is as follows. Catalyzes the reduction of the glycolytic intermediate dihydroxyacetone phosphate (DHAP) to sn-glycerol 3-phosphate (G3P), the key precursor for phospholipid synthesis. This chain is Glycerol-3-phosphate dehydrogenase [NAD(P)+], found in Rickettsia africae (strain ESF-5).